The chain runs to 175 residues: uncharacterized protein (175 aa).

5 helical membrane-spanning segments follow: residues 25–45 (MIAI…TTIS), 46–66 (ATGP…FFLL), 97–117 (FAGW…LTAV), 124–144 (WLPG…LTLL), and 155–175 (TEFW…VTGI).

Belongs to the amino acid-polyamine-organocation (APC) superfamily.

The protein localises to the cell membrane. This is an uncharacterized protein from Lactobacillus delbrueckii subsp. lactis.